The chain runs to 120 residues: Small cysteine and glycine repeat-containing protein 2 (120 aa).

The interval 4–104 is 19 X 2 AA repeats of CG; it reads CGCGGCGGCG…TCHSCGCGCG (101 aa).

The protein belongs to the KRTAP type 28 family.

In terms of biological role, in the hair cortex, hair keratin intermediate filaments are embedded in an interfilamentous matrix, consisting of hair keratin-associated proteins (KRTAP), which are essential for the formation of a rigid and resistant hair shaft through their extensive disulfide bond cross-linking with abundant cysteine residues of hair keratins. The matrix proteins include the high-sulfur and high-glycine-tyrosine keratins. This is Small cysteine and glycine repeat-containing protein 2 from Homo sapiens (Human).